We begin with the raw amino-acid sequence, 221 residues long: UPF0758 protein YicR (221 aa).

The MPN domain occupies 99 to 221; sequence ALLSPEMTRE…YVSFAERGWI (123 aa). Zn(2+) contacts are provided by histidine 170, histidine 172, and aspartate 183. A JAMM motif motif is present at residues 170–183; that stretch reads HNHPSGCAEPSKAD.

It belongs to the UPF0758 family. YicR subfamily.

The sequence is that of UPF0758 protein YicR from Salmonella newport (strain SL254).